Consider the following 288-residue polypeptide: MADFEVLGQTVGTNRFFVIGGPCVIENRDMTLRIAEFLRNACARLHIPCVFKSSYDKANRTSIHSYRGPGIEEGLAILSEVRREIGIPVLTDVHGVSEVAPAKEVVDILQVPAFLARQTDLVVAVGLTGKPVNLKKAQFLAPRDMSLVIEKVRGTGNDKILVTERGTQFGYNNLVVDMRSIPILSESGCPVVFDATHSVQLPGGQGTRSGGERRYVAALACAAVAAGAHGVFLEMHEDPDRALCDGPNSLPLEQVSPLLEKLLDIHRIVRDTYGAQDADIERKTGREH.

The protein belongs to the KdsA family.

Its subcellular location is the cytoplasm. It carries out the reaction D-arabinose 5-phosphate + phosphoenolpyruvate + H2O = 3-deoxy-alpha-D-manno-2-octulosonate-8-phosphate + phosphate. It functions in the pathway carbohydrate biosynthesis; 3-deoxy-D-manno-octulosonate biosynthesis; 3-deoxy-D-manno-octulosonate from D-ribulose 5-phosphate: step 2/3. Its pathway is bacterial outer membrane biogenesis; lipopolysaccharide biosynthesis. This Syntrophobacter fumaroxidans (strain DSM 10017 / MPOB) protein is 2-dehydro-3-deoxyphosphooctonate aldolase.